Consider the following 41-residue polypeptide: uncharacterized protein (41 aa).

This is an uncharacterized protein from Archaeoglobus fulgidus (strain ATCC 49558 / DSM 4304 / JCM 9628 / NBRC 100126 / VC-16).